Reading from the N-terminus, the 412-residue chain is Acyl-[acyl-carrier-protein] hydrolase FATB2, chloroplastic (412 aa).

Low complexity-rich tracts occupy residues 1-13 (TAASSAFFPVPSA) and 56-66 (GSSVGLKSGGL). The N-terminal 46 residues, 1–46 (TAASSAFFPVPSADTSSRPGKLGNGPSSFSPLKPKSIPNGGLQVKA), are a transit peptide targeting the chloroplast. The interval 1 to 78 (TAASSAFFPV…HDDAPSAPPP (78 aa)) is disordered. Active-site residues include N311, H313, and C348.

It belongs to the acyl-ACP thioesterase family.

It is found in the plastid. The protein localises to the chloroplast. The catalysed reaction is tetradecanoyl-[ACP] + H2O = tetradecanoate + holo-[ACP] + H(+). The enzyme catalyses hexadecanoyl-[ACP] + H2O = hexadecanoate + holo-[ACP] + H(+). Its function is as follows. Plays an essential role in chain termination during de novo fatty acid synthesis. Possesses thioesterase activity for medium chain acyl-ACPs. Substrate preference is 14:0 &gt; 16:0 &gt; 16:1. In Cuphea viscosissima (Blue waxweed), this protein is Acyl-[acyl-carrier-protein] hydrolase FATB2, chloroplastic.